The following is a 468-amino-acid chain: MDYLPLFARLNNRAVLLVGGGDIALRKARLLLDAGANLTVVAPSLHEELTELLVGHTYIPSRFTAAYLNDQMLVIAATDDEEVNAEVAAAADAANIWVNVVDDPDRSSFIFPSIIDRSPIMVAVSSGGKAPVLVRMLRERLEALLPKHLGALANLSGEWRNQIKQKLGDITSRRRFWEKAFASPQLATLLETEQHDSAEQWMADQLQADDYAGGEIVLVGAGPGDAGLLTLKGLQQIQQAEVVLYDQLVSPEVLNLVRRDAERISVGKKAGHHSVPQHEINELLLSHARAGKRVVRLKGGDPFMFGRGAEELQAARAEGIPFSVVPGITAAAGATAYAGIPLTHRDSAQSAVFITGHCKQDGEEPDWAALAASNQTLVIYMGLIGSPAITERLIAHGRRPETPVALIERGTTVRQRVLRGTLQELPELAKDAHSPSLIVIGEVAALADTLSWFGGDTASGKEHLINLA.

A precorrin-2 dehydrogenase /sirohydrochlorin ferrochelatase region spans residues 1–202 (MDYLPLFARL…EQHDSAEQWM (202 aa)). Residues 22 to 23 (DI) and 43 to 44 (PS) each bind NAD(+). Residue serine 126 is modified to Phosphoserine. Residues 214-468 (GEIVLVGAGP…SGKEHLINLA (255 aa)) form a uroporphyrinogen-III C-methyltransferase region. Residue proline 223 participates in S-adenosyl-L-methionine binding. Aspartate 246 acts as the Proton acceptor in catalysis. Lysine 268 (proton donor) is an active-site residue. S-adenosyl-L-methionine-binding positions include 299 to 301 (GGD), 329 to 330 (TA), methionine 381, and glycine 410.

In the N-terminal section; belongs to the precorrin-2 dehydrogenase / sirohydrochlorin ferrochelatase family. This sequence in the C-terminal section; belongs to the precorrin methyltransferase family.

It catalyses the reaction uroporphyrinogen III + 2 S-adenosyl-L-methionine = precorrin-2 + 2 S-adenosyl-L-homocysteine + H(+). The enzyme catalyses precorrin-2 + NAD(+) = sirohydrochlorin + NADH + 2 H(+). The catalysed reaction is siroheme + 2 H(+) = sirohydrochlorin + Fe(2+). Its pathway is cofactor biosynthesis; adenosylcobalamin biosynthesis; precorrin-2 from uroporphyrinogen III: step 1/1. It functions in the pathway cofactor biosynthesis; adenosylcobalamin biosynthesis; sirohydrochlorin from precorrin-2: step 1/1. It participates in porphyrin-containing compound metabolism; siroheme biosynthesis; precorrin-2 from uroporphyrinogen III: step 1/1. The protein operates within porphyrin-containing compound metabolism; siroheme biosynthesis; siroheme from sirohydrochlorin: step 1/1. Its pathway is porphyrin-containing compound metabolism; siroheme biosynthesis; sirohydrochlorin from precorrin-2: step 1/1. Multifunctional enzyme that catalyzes the SAM-dependent methylations of uroporphyrinogen III at position C-2 and C-7 to form precorrin-2 via precorrin-1. Then it catalyzes the NAD-dependent ring dehydrogenation of precorrin-2 to yield sirohydrochlorin. Finally, it catalyzes the ferrochelation of sirohydrochlorin to yield siroheme. The chain is Siroheme synthase from Tolumonas auensis (strain DSM 9187 / NBRC 110442 / TA 4).